We begin with the raw amino-acid sequence, 182 residues long: Keratin, type II cytoskeletal 68 kDa, component IA (182 aa).

Positions 1–66 constitute an IF rod domain; sequence DAEQHGEVAL…TLLEGEECRM (66 aa). The tract at residues 1–66 is coil 2B; the sequence is DAEQHGEVAL…TLLEGEECRM (66 aa). The tract at residues 67–86 is H2 subdomain; the sequence is SGECQSSVSIEMVHNTTSSS. Residues 67 to 182 form a tail region; that stretch reads SGECQSSVSI…SQSQRSHHKL (116 aa). The segment at 87 to 162 is V2 subdomain; that stretch reads SGGSGALGGG…GSCAVSGVGG (76 aa). Over residues 104-124 the composition is skewed to gly residues; that stretch reads GSGGLGSGSLGSGRLGSGGRG. Residues 104–182 are disordered; the sequence is GSGGLGSGSL…SQSQRSHHKL (79 aa). Composition is skewed to low complexity over residues 144 to 158 and 165 to 176; these read VRGS…CAVS and SVRVTQSSSQSQ. The tract at residues 163–182 is E2 subdomain; it reads RGSVRVTQSSSQSQRSHHKL.

Belongs to the intermediate filament family. Heterotetramer of two type I and two type II keratins.

The chain is Keratin, type II cytoskeletal 68 kDa, component IA from Bos taurus (Bovine).